The primary structure comprises 514 residues: GMP synthase [glutamine-hydrolyzing] (514 aa).

A Glutamine amidotransferase type-1 domain is found at 9 to 199 (MILVLDFGGQ…LFEVCQCTGD (191 aa)). Cysteine 86 serves as the catalytic Nucleophile. Catalysis depends on residues histidine 173 and glutamate 175. One can recognise a GMPS ATP-PPase domain in the interval 200–389 (WSMENFIEIE…LGLSDEIVWR (190 aa)). Position 227–233 (227–233 (SGGVDSS)) interacts with ATP.

As to quaternary structure, homodimer.

The enzyme catalyses XMP + L-glutamine + ATP + H2O = GMP + L-glutamate + AMP + diphosphate + 2 H(+). Its pathway is purine metabolism; GMP biosynthesis; GMP from XMP (L-Gln route): step 1/1. Functionally, catalyzes the synthesis of GMP from XMP. In Exiguobacterium sibiricum (strain DSM 17290 / CCUG 55495 / CIP 109462 / JCM 13490 / 255-15), this protein is GMP synthase [glutamine-hydrolyzing].